The sequence spans 85 residues: Contulakin-Lt2 (85 aa).

Residues 1–22 form the signal peptide; the sequence is MQMAYWVMVMMMVGITAPLSEG. A propeptide spanning residues 23–61 is cleaved from the precursor; it reads RKLNDAIRGLVPNDLTPQLLQSLVSRRHRVFHLDNTYLK. A disulfide bridge connects residues Cys-65 and Cys-70. Positions 76-85 are excised as a propeptide; sequence RRRDLKKRNK.

It belongs to the conotoxin C superfamily. As to expression, expressed by the venom duct.

The protein resides in the secreted. In terms of biological role, acts as an agonist of neurotensin receptors. It binds to human neurotensin type 1 receptor (NTSR1), rat neurotensin types 1 and 2 receptors (NTSR1/NTSR2) and mouse neurotensin type 3 receptor (SORT1). In Conus litteratus (Lettered cone), this protein is Contulakin-Lt2.